The primary structure comprises 150 residues: Large ribosomal subunit protein bL9 (150 aa).

This sequence belongs to the bacterial ribosomal protein bL9 family.

Functionally, binds to the 23S rRNA. The polypeptide is Large ribosomal subunit protein bL9 (Photobacterium profundum (strain SS9)).